A 115-amino-acid polypeptide reads, in one-letter code: NAD(P)H-quinone oxidoreductase subunit M (115 aa).

Belongs to the complex I NdhM subunit family. As to quaternary structure, NDH-1 can be composed of about 15 different subunits; different subcomplexes with different compositions have been identified which probably have different functions.

It is found in the cellular thylakoid membrane. The catalysed reaction is a plastoquinone + NADH + (n+1) H(+)(in) = a plastoquinol + NAD(+) + n H(+)(out). It carries out the reaction a plastoquinone + NADPH + (n+1) H(+)(in) = a plastoquinol + NADP(+) + n H(+)(out). NDH-1 shuttles electrons from an unknown electron donor, via FMN and iron-sulfur (Fe-S) centers, to quinones in the respiratory and/or the photosynthetic chain. The immediate electron acceptor for the enzyme in this species is believed to be plastoquinone. Couples the redox reaction to proton translocation, and thus conserves the redox energy in a proton gradient. Cyanobacterial NDH-1 also plays a role in inorganic carbon-concentration. This is NAD(P)H-quinone oxidoreductase subunit M from Prochlorococcus marinus (strain SARG / CCMP1375 / SS120).